A 418-amino-acid chain; its full sequence is UDP-N-acetylglucosamine 1-carboxyvinyltransferase 2 (418 aa).

A phosphoenolpyruvate-binding site is contributed by 22-23 (KN). Residue R92 coordinates UDP-N-acetyl-alpha-D-glucosamine. The Proton donor role is filled by C116. The residue at position 116 (C116) is a 2-(S-cysteinyl)pyruvic acid O-phosphothioketal. 2 residues coordinate UDP-N-acetyl-alpha-D-glucosamine: D305 and I327.

This sequence belongs to the EPSP synthase family. MurA subfamily.

The protein localises to the cytoplasm. The enzyme catalyses phosphoenolpyruvate + UDP-N-acetyl-alpha-D-glucosamine = UDP-N-acetyl-3-O-(1-carboxyvinyl)-alpha-D-glucosamine + phosphate. It participates in cell wall biogenesis; peptidoglycan biosynthesis. In terms of biological role, cell wall formation. Adds enolpyruvyl to UDP-N-acetylglucosamine. The sequence is that of UDP-N-acetylglucosamine 1-carboxyvinyltransferase 2 from Mesorhizobium japonicum (strain LMG 29417 / CECT 9101 / MAFF 303099) (Mesorhizobium loti (strain MAFF 303099)).